A 340-amino-acid polypeptide reads, in one-letter code: S-adenosylmethionine:tRNA ribosyltransferase-isomerase (340 aa).

The protein belongs to the QueA family. As to quaternary structure, monomer.

Its subcellular location is the cytoplasm. It catalyses the reaction 7-aminomethyl-7-carbaguanosine(34) in tRNA + S-adenosyl-L-methionine = epoxyqueuosine(34) in tRNA + adenine + L-methionine + 2 H(+). It functions in the pathway tRNA modification; tRNA-queuosine biosynthesis. Its function is as follows. Transfers and isomerizes the ribose moiety from AdoMet to the 7-aminomethyl group of 7-deazaguanine (preQ1-tRNA) to give epoxyqueuosine (oQ-tRNA). This Chlorobaculum parvum (strain DSM 263 / NCIMB 8327) (Chlorobium vibrioforme subsp. thiosulfatophilum) protein is S-adenosylmethionine:tRNA ribosyltransferase-isomerase.